The chain runs to 457 residues: Argininosuccinate lyase (457 aa).

Belongs to the lyase 1 family. Argininosuccinate lyase subfamily.

The protein localises to the cytoplasm. The enzyme catalyses 2-(N(omega)-L-arginino)succinate = fumarate + L-arginine. Its pathway is amino-acid biosynthesis; L-arginine biosynthesis; L-arginine from L-ornithine and carbamoyl phosphate: step 3/3. The protein is Argininosuccinate lyase of Yersinia pseudotuberculosis serotype IB (strain PB1/+).